The sequence spans 822 residues: Stemar-13-ene synthase (822 aa).

Positions 1-10 are enriched in polar residues; that stretch reads MMLLSSSYSG. A disordered region spans residues 1 to 29; sequence MMLLSSSYSGGQFPGVSPLGTRPKRSTTV. Mg(2+) contacts are provided by Asp-553, Asp-557, Asn-698, Thr-702, and Glu-706. Residues 553-557 carry the DDXXD motif motif; that stretch reads DDLFD.

This sequence belongs to the terpene synthase family. Mg(2+) serves as cofactor.

The catalysed reaction is 9alpha-copalyl diphosphate = stemar-13-ene + diphosphate. Its function is as follows. Catalyzes the conversion of syn-copalyl diphosphate to the phytoalexin precursor stemarene. The chain is Stemar-13-ene synthase (KSL8) from Oryza sativa subsp. japonica (Rice).